The sequence spans 193 residues: Orotate phosphoribosyltransferase (193 aa).

5-phospho-alpha-D-ribose 1-diphosphate contacts are provided by residues Arg-102, Lys-103, Lys-106, His-108, and 129–137 (EDVVTTGGS). Orotate contacts are provided by Thr-133 and Arg-161.

This sequence belongs to the purine/pyrimidine phosphoribosyltransferase family. PyrE subfamily. Homodimer. Mg(2+) serves as cofactor.

It carries out the reaction orotidine 5'-phosphate + diphosphate = orotate + 5-phospho-alpha-D-ribose 1-diphosphate. It participates in pyrimidine metabolism; UMP biosynthesis via de novo pathway; UMP from orotate: step 1/2. Its function is as follows. Catalyzes the transfer of a ribosyl phosphate group from 5-phosphoribose 1-diphosphate to orotate, leading to the formation of orotidine monophosphate (OMP). This Prochlorococcus marinus (strain NATL1A) protein is Orotate phosphoribosyltransferase.